The sequence spans 522 residues: Bifunctional purine biosynthesis protein PurH (522 aa).

One can recognise an MGS-like domain in the interval 1–145 (MKPIARALIS…KNHAAVTVIV (145 aa)).

This sequence belongs to the PurH family.

The catalysed reaction is (6R)-10-formyltetrahydrofolate + 5-amino-1-(5-phospho-beta-D-ribosyl)imidazole-4-carboxamide = 5-formamido-1-(5-phospho-D-ribosyl)imidazole-4-carboxamide + (6S)-5,6,7,8-tetrahydrofolate. The enzyme catalyses IMP + H2O = 5-formamido-1-(5-phospho-D-ribosyl)imidazole-4-carboxamide. The protein operates within purine metabolism; IMP biosynthesis via de novo pathway; 5-formamido-1-(5-phospho-D-ribosyl)imidazole-4-carboxamide from 5-amino-1-(5-phospho-D-ribosyl)imidazole-4-carboxamide (10-formyl THF route): step 1/1. It participates in purine metabolism; IMP biosynthesis via de novo pathway; IMP from 5-formamido-1-(5-phospho-D-ribosyl)imidazole-4-carboxamide: step 1/1. The protein is Bifunctional purine biosynthesis protein PurH of Nitrosococcus oceani (strain ATCC 19707 / BCRC 17464 / JCM 30415 / NCIMB 11848 / C-107).